A 146-amino-acid chain; its full sequence is Cytochrome b5 type B (146 aa).

Positions 1–11 are excised as a propeptide; the sequence is MATPEASGSGR. The Cytochrome b5 heme-binding domain occupies 20-96; that stretch reads VTYYRLEEVA…LKQYYIGDVH (77 aa). An N6-acetyllysine modification is found at K30. The heme site is built by H55 and H79. A Phosphoserine modification is found at S80. A helical transmembrane segment spans residues 119 to 136; the sequence is WAYWIVPIVGAILIGFLY.

This sequence belongs to the cytochrome b5 family. In terms of assembly, component of a complex composed of cytochrome b5, NADH-cytochrome b5 reductase (CYB5R3) and MTARC2.

It localises to the mitochondrion outer membrane. Its function is as follows. Cytochrome b5 is a membrane-bound hemoprotein functioning as an electron carrier for several membrane-bound oxygenases. This Rattus norvegicus (Rat) protein is Cytochrome b5 type B (Cyb5b).